The sequence spans 647 residues: Threonine--tRNA ligase (647 aa).

Positions 1 to 61 constitute a TGS domain; the sequence is MIKITFPDGA…TEDGSIEIVT (61 aa). The interval 242-540 is catalytic; sequence DHRKLGKELD…LIENYKGAFP (299 aa). Cysteine 336, histidine 387, and histidine 517 together coordinate Zn(2+).

The protein belongs to the class-II aminoacyl-tRNA synthetase family. In terms of assembly, homodimer. Zn(2+) serves as cofactor.

Its subcellular location is the cytoplasm. The catalysed reaction is tRNA(Thr) + L-threonine + ATP = L-threonyl-tRNA(Thr) + AMP + diphosphate + H(+). Functionally, catalyzes the attachment of threonine to tRNA(Thr) in a two-step reaction: L-threonine is first activated by ATP to form Thr-AMP and then transferred to the acceptor end of tRNA(Thr). Also edits incorrectly charged L-seryl-tRNA(Thr). The sequence is that of Threonine--tRNA ligase from Streptococcus gordonii (strain Challis / ATCC 35105 / BCRC 15272 / CH1 / DL1 / V288).